We begin with the raw amino-acid sequence, 147 residues long: MEIILKEDVVNLGYKNDIVTVKSGYGRNYLIPTGKAVIASPSAKKMLAEELKQRAHKLEKIKKDAEAVAAKLEGVSLTIATKVSSTGTIFGSVGNIQIAEELAKLGHEIDRKIIVVKDAVKEVGAYKAIVKLHKEVSVEIPFEVVAE.

It belongs to the bacterial ribosomal protein bL9 family.

Its function is as follows. Binds to the 23S rRNA. The protein is Large ribosomal subunit protein bL9 of Bacteroides fragilis (strain YCH46).